A 284-amino-acid polypeptide reads, in one-letter code: ADP-polyphosphate phosphotransferase 3 (284 aa).

Basic and acidic residues-rich tracts occupy residues M1 to A22 and D260 to R277. 2 disordered regions span residues M1–G32 and D260–F284.

The protein belongs to the polyphosphate kinase 2 (PPK2) family. Class I subfamily.

The catalysed reaction is [phosphate](n) + ATP = [phosphate](n+1) + ADP. The enzyme catalyses [phosphate](n) + GTP = [phosphate](n+1) + GDP. Its function is as follows. Uses inorganic polyphosphate (polyP) as a donor to convert ADP to ATP. Can also convert GDP to GTP, with lower efficiency. The protein is ADP-polyphosphate phosphotransferase 3 of Rhizobium meliloti (strain 1021) (Ensifer meliloti).